Consider the following 174-residue polypeptide: Protein TM_1551 (174 aa).

Positions Ile2–Lys174 constitute an AMMECR1 domain.

The chain is Protein TM_1551 from Thermotoga maritima (strain ATCC 43589 / DSM 3109 / JCM 10099 / NBRC 100826 / MSB8).